Here is a 525-residue protein sequence, read N- to C-terminus: Protein-export membrane protein SecD (525 aa).

The next 6 helical transmembrane spans lie at 16-36, 368-388, 395-415, 421-441, 466-486, and 488-508; these read VLLL…KGLT, QAII…YFHY, IPVA…AALI, LPSI…QIVI, AFFI…FLLV, and FVGT…IGVL.

The protein belongs to the SecD/SecF family. SecD subfamily. In terms of assembly, part of the protein translocation apparatus. Forms a complex with SecF.

The protein localises to the cell membrane. Its function is as follows. Involved in protein export. This is Protein-export membrane protein SecD from Thermococcus gammatolerans (strain DSM 15229 / JCM 11827 / EJ3).